The primary structure comprises 188 residues: MLGNFRFDDMVEKLSRRVAGRTSRRGAIGRLGTVLAGAALVPLLPVDRRGRVSRANAAGPAEGVDPRAKWQPQDNDIQACDYWRHCSIDGNICDCSGGSLTNCPPGTKLATASWVASCYNPTDGQSYLIAYRDCCGYNVSGRCPCLNTEGELPVYRPEFANDIIWCFGAEDDAMTYHCTISPIVGKAS.

Positions 1–57 form a signal peptide, tat-type signal; it reads MLGNFRFDDMVEKLSRRVAGRTSRRGAIGRLGTVLAGAALVPLLPVDRRGRVSRANA. Disulfide bonds link Cys-80/Cys-145, Cys-86/Cys-118, Cys-93/Cys-178, Cys-95/Cys-143, Cys-103/Cys-134, and Cys-135/Cys-166. Position 114 is a tryptophylquinone (Trp-114). Residues 114-165 constitute a cross-link (tryptophan tryptophylquinone (Trp-Trp)); the sequence is WVASCYNPTDGQSYLIAYRDCCGYNVSGRCPCLNTEGELPVYRPEFANDIIW.

This sequence belongs to the aromatic amine dehydrogenase light chain family. In terms of assembly, heterotetramer of two light and two heavy chains. It depends on tryptophan tryptophylquinone residue as a cofactor. In terms of processing, predicted to be exported by the Tat system. The position of the signal peptide cleavage has been experimentally proven. Tryptophan tryptophylquinone (TTQ) is formed by oxidation of the indole ring of a tryptophan to form tryptophylquinone followed by covalent cross-linking with another tryptophan residue.

Its subcellular location is the periplasm. The enzyme catalyses 2 oxidized [amicyanin] + methylamine + H2O = 2 reduced [amicyanin] + formaldehyde + NH4(+) + 2 H(+). Its pathway is one-carbon metabolism; methylamine degradation; formaldehyde from methylamine: step 1/1. In terms of biological role, methylamine dehydrogenase carries out the oxidation of methylamine. Electrons are passed from methylamine dehydrogenase to amicyanin. The protein is Methylamine dehydrogenase light chain (mauA) of Paracoccus versutus (Thiobacillus versutus).